Reading from the N-terminus, the 479-residue chain is UDP-N-acetylmuramate--L-alanine ligase (479 aa).

Position 126–132 (126–132 (GTHGKTT)) interacts with ATP.

Belongs to the MurCDEF family.

The protein localises to the cytoplasm. It catalyses the reaction UDP-N-acetyl-alpha-D-muramate + L-alanine + ATP = UDP-N-acetyl-alpha-D-muramoyl-L-alanine + ADP + phosphate + H(+). Its pathway is cell wall biogenesis; peptidoglycan biosynthesis. Functionally, cell wall formation. This is UDP-N-acetylmuramate--L-alanine ligase from Alkalilimnicola ehrlichii (strain ATCC BAA-1101 / DSM 17681 / MLHE-1).